The chain runs to 412 residues: 3,4-dihydroxybenzoate--[aryl-carrier protein] ligase (412 aa).

Belongs to the ATP-dependent AMP-binding enzyme family.

It carries out the reaction holo-[aryl-carrier protein] + 3,4-dihydroxybenzoate + ATP = 3,4-dihydroxybenzoyl-[aryl-carrier protein] + AMP + diphosphate. It catalyses the reaction 3,4-dihydroxybenzoate + ATP + H(+) = 3,4-dihydroxybenzoyl-5'-AMP + diphosphate. The enzyme catalyses 3,4-dihydroxybenzoyl-5'-AMP + holo-[aryl-carrier protein] = 3,4-dihydroxybenzoyl-[aryl-carrier protein] + AMP + H(+). Its pathway is siderophore biosynthesis; petrobactin biosynthesis. With respect to regulation, ATP-pyrophosphate exchange is inhibited in vitro by nonhydrolyzable acylsulfamate analogs that mimic the AsbC-bound intermediate 3,4-dihydroxybenzoyl-AMP. Functionally, involved in the biosynthesis of petrobactin, a catecholate siderophore that functions in both iron acquisition and virulence. Catalyzes the adenylation of 3,4-dihydroxybenzoate (3,4-DHBA) to the corresponding AMP ester, followed by the transfer of the activated unit to the phosphopantetheine thiol of the aryl-carrier protein AsbD. This Bacillus anthracis protein is 3,4-dihydroxybenzoate--[aryl-carrier protein] ligase.